Reading from the N-terminus, the 486-residue chain is UDP-N-acetylmuramate--L-alanine ligase (486 aa).

Residue 129–135 participates in ATP binding; it reads GTHGKTT.

This sequence belongs to the MurCDEF family.

The protein localises to the cytoplasm. The enzyme catalyses UDP-N-acetyl-alpha-D-muramate + L-alanine + ATP = UDP-N-acetyl-alpha-D-muramoyl-L-alanine + ADP + phosphate + H(+). It participates in cell wall biogenesis; peptidoglycan biosynthesis. In terms of biological role, cell wall formation. The polypeptide is UDP-N-acetylmuramate--L-alanine ligase (Vibrio vulnificus (strain YJ016)).